The following is an 83-amino-acid chain: Tetracenomycin polyketide synthase acyl carrier protein (83 aa).

Residues 3-83 (QIGLPRLVEI…VNTETAGEVA (81 aa)) enclose the Carrier domain. Ser41 carries the post-translational modification O-(pantetheine 4'-phosphoryl)serine.

In terms of assembly, the tetracenomycin polyketide synthase (TCM PKS) is composed of a ketosynthase complex (TcmKL), an acyl carrier protein (TcmM), a cyclase (TcmN) and a probable second cyclase (TcmJ). Pantetheine 4'-phosphate serves as cofactor. 4'-phosphopantetheine is transferred from CoA to a specific serine of apo-ACP.

The enzyme catalyses 10 malonyl-CoA + 8 H(+) = tetracenomycin F2 + 10 CO2 + 10 CoA + 2 H2O. It participates in antibiotic biosynthesis; tetracenomycin C biosynthesis. Involved in the biosynthesis of tetracenomycin C (TCM C). Part of a type II polyketide synthase (PKS) that catalyzes the synthesis of tetracenomycin F2 (TCM F2), a precursor of TCM C, from malonyl-CoA. TcmM is an acyl carrier protein that serves as an acceptor of malonate from malonyl-CoA and acts as the tether for the substrates and intermediates of polyketide assembly. The malonyl CoA-acyl carrier protein transacylase FabD (MCT) is required to catalyze the transacylation between malonyl-CoA and TcmM, although a relatively slow spontaneous self-malonylation of TcmM also occurs in a reaction without the MCT. The sequence is that of Tetracenomycin polyketide synthase acyl carrier protein from Streptomyces glaucescens.